A 631-amino-acid chain; its full sequence is Sphingomyelin phosphodiesterase (631 aa).

Residues 1–23 are disordered; that stretch reads MPRYGASLRQSCPRSGREQGQDG. The N-terminal stretch at 1–46 is a signal peptide; that stretch reads MPRYGASLRQSCPRSGREQGQDGTAGAPGLLWMGLVLALALALALA. Positions 87-171 constitute a Saposin B-type domain; it reads GNLTCPICKG…LLGSTCGHWD (85 aa). Residue Asn88 is glycosylated (N-linked (GlcNAc...) asparagine). 3 cysteine pairs are disulfide-bonded: Cys91–Cys167, Cys94–Cys159, and Cys122–Cys133. Residue Asn177 is glycosylated (N-linked (GlcNAc...) asparagine). Asp208 and His210 together coordinate Zn(2+). 2 disulfide bridges follow: Cys223/Cys228 and Cys229/Cys252. Residues Asp280 and Asn320 each coordinate Zn(2+). 2 N-linked (GlcNAc...) asparagine glycosylation sites follow: Asn337 and Asn397. Cys387 and Cys433 are disulfide-bonded. Zn(2+)-binding residues include His427, His459, and His461. N-linked (GlcNAc...) asparagine glycosylation is present at Asn505. At Ser510 the chain carries Phosphoserine; by PKC/PRKCD. Residue Asn522 is glycosylated (N-linked (GlcNAc...) asparagine). 2 cysteine pairs are disulfide-bonded: Cys586/Cys590 and Cys596/Cys609.

It belongs to the acid sphingomyelinase family. In terms of assembly, monomer. Interacts with SORT1; the interaction is required for SMPD1 targeting to lysosomes. It depends on Zn(2+) as a cofactor. Post-translationally, proteolytically processed. Mature lysosomal form arises from C-terminal proteolytic processing of pro-sphingomyelin phosphodiesterase. This form is generated following cleavage by CASP7 in the extracellular milieu. It shows increased activity. In terms of processing, both lysosomal and secreted forms are glycosylated but they show a differential pattern of glycosylation. Post-translationally, phosphorylated at Ser-510 by PRKCD upon stress stimuli. Phosphorylation is required for secretion.

The protein resides in the lysosome. It localises to the lipid droplet. It is found in the secreted. Its subcellular location is the extracellular space. The catalysed reaction is a sphingomyelin + H2O = phosphocholine + an N-acylsphing-4-enine + H(+). It carries out the reaction N-(octadecanoyl)-sphing-4-enine-1-phosphocholine + H2O = N-octadecanoylsphing-4-enine + phosphocholine + H(+). The enzyme catalyses 1,2-dihexadecanoyl-sn-glycero-3-phosphocholine + H2O = 1,2-dihexadecanoyl-sn-glycerol + phosphocholine + H(+). It catalyses the reaction a 1,2-diacyl-sn-glycero-3-phosphocholine + H2O = phosphocholine + a 1,2-diacyl-sn-glycerol + H(+). Hydrolysis of liposomal sphingomyelin is stimulated by incorporation of diacylglycerol (DAG), ceramide and free fatty acids into the liposomal membranes. Phosphatidylcholine hydrolysis is inhibited by incorporation of cholesterol, ceramide, DAG, monoacylglycerol and fatty acids. Antidepressants, namely amitriptyline, imipramine, desipramine, fluoxetine, sertraline, escitalopram, and maprotiline inhibit sphingomyelin phosphodiesterase activity. Its activity is regulated as follows. (Microbial infection) The secretory form is activated by P.aeruginosa, this activation results in the release of ceramide in the outer leaflet of the plasma membrane. With respect to regulation, (Microbial infection) The secretory form is activated by human coronavirus SARS-CoV-2, this activation results in the release of ceramide in the outer leaflet of the plasma membrane. Converts sphingomyelin to ceramide. Exists as two enzymatic forms that arise from alternative trafficking of a single protein precursor, one that is targeted to the endolysosomal compartment, whereas the other is released extracellularly. However, in response to various forms of stress, lysosomal exocytosis may represent a major source of the secretory form. In terms of biological role, in the lysosomes, converts sphingomyelin to ceramide. Plays an important role in the export of cholesterol from the intraendolysosomal membranes. Also has phospholipase C activities toward 1,2-diacylglycerolphosphocholine and 1,2-diacylglycerolphosphoglycerol. Modulates stress-induced apoptosis through the production of ceramide. Its function is as follows. When secreted, modulates cell signaling with its ability to reorganize the plasma membrane by converting sphingomyelin to ceramide. Secreted form is increased in response to stress and inflammatory mediators such as IL1B, IFNG or TNF as well as upon infection with bacteria and viruses. Produces the release of ceramide in the outer leaflet of the plasma membrane playing a central role in host defense. Ceramide reorganizes these rafts into larger signaling platforms that are required to internalize P.aeruginosa, induce apoptosis and regulate the cytokine response in infected cells. In wounded cells, the lysosomal form is released extracellularly in the presence of Ca(2+) and promotes endocytosis and plasma membrane repair. Functionally, this form is generated following cleavage by CASP7 in the extracellular milieu in response to bacterial infection. It shows increased ability to convert sphingomyelin to ceramide and promotes plasma membrane repair. Plasma membrane repair by ceramide counteracts the action of gasdermin-D (GSDMD) perforin (PRF1) pores that are formed in response to bacterial infection. (Microbial infection) Secretion is activated by bacteria such as P.aeruginosa, N.gonorrhoeae and others, this activation results in the release of ceramide in the outer leaflet of the plasma membrane which facilitates the infection. In terms of biological role, (Microbial infection) Secretion is activated by human coronaviruses SARS-CoV and SARS-CoV-2 as well as Zaire ebolavirus, this activation results in the release of ceramide in the outer leaflet of the plasma membrane which facilitates the infection. Its function is as follows. Lacks residues that bind the cofactor Zn(2+) and has no enzyme activity. This chain is Sphingomyelin phosphodiesterase, found in Homo sapiens (Human).